The sequence spans 185 residues: Casparian strip membrane protein 2 (185 aa).

Residues 1-25 are Cytoplasmic-facing; sequence MKAVSIEAGEGSKAKRVHGVNRGIS. Residues 26 to 46 traverse the membrane as a helical segment; the sequence is VFDLVLRIVALVGTLASAVAM. Residues 47 to 73 are Extracellular-facing; sequence GTADQALSFSTQIVNFEAQYDDIDAFK. The chain crosses the membrane as a helical span at residues 74 to 94; the sequence is FFVVSNSITCVYLALSIPISI. Over 95-106 the chain is Cytoplasmic; it reads FHIIRSRAGKSR. The chain crosses the membrane as a helical span at residues 107 to 127; sequence VLLIVLDAIMLVFLTSGASAA. The Extracellular segment spans residues 128-160; that stretch reads AAIVYLAHNGNTSTNWFSICQQYTDFCQRSAGS. N-linked (GlcNAc...) asparagine glycosylation is present at Asn138. Residues 161–181 form a helical membrane-spanning segment; that stretch reads LIGSFGAMALMVLLIILSSIA. Topologically, residues 182 to 185 are cytoplasmic; sequence LSRR.

The protein belongs to the Casparian strip membrane proteins (CASP) family. As to quaternary structure, homodimer and heterodimers.

Its subcellular location is the cell membrane. Regulates membrane-cell wall junctions and localized cell wall deposition. Required for establishment of the Casparian strip membrane domain (CSD) and the subsequent formation of Casparian strips, a cell wall modification of the root endodermis that determines an apoplastic barrier between the intraorganismal apoplasm and the extraorganismal apoplasm and prevents lateral diffusion. The protein is Casparian strip membrane protein 2 of Solanum demissum (Wild potato).